Here is a 180-residue protein sequence, read N- to C-terminus: ATP-dependent protease subunit HslV (180 aa).

Thr-6 is an active-site residue. Ala-164, Cys-167, and Thr-170 together coordinate Na(+).

The protein belongs to the peptidase T1B family. HslV subfamily. In terms of assembly, a double ring-shaped homohexamer of HslV is capped on each side by a ring-shaped HslU homohexamer. The assembly of the HslU/HslV complex is dependent on binding of ATP.

The protein resides in the cytoplasm. The catalysed reaction is ATP-dependent cleavage of peptide bonds with broad specificity.. Allosterically activated by HslU binding. Protease subunit of a proteasome-like degradation complex believed to be a general protein degrading machinery. In Borrelia hermsii (strain HS1 / DAH), this protein is ATP-dependent protease subunit HslV.